We begin with the raw amino-acid sequence, 448 residues long: Probable rhamnogalacturonase E (448 aa).

The signal sequence occupies residues 1–22; it reads MTWSTSFLVATSLLSIINSVHA. The cysteines at positions 43 and 69 are disulfide-linked. 3 N-linked (GlcNAc...) asparagine glycosylation sites follow: asparagine 54, asparagine 92, and asparagine 131. The Proton donor role is filled by aspartate 221. The cysteines at positions 223 and 240 are disulfide-linked. N-linked (GlcNAc...) asparagine glycans are attached at residues asparagine 256 and asparagine 284. The active site involves histidine 296. Asparagine 323 and asparagine 328 each carry an N-linked (GlcNAc...) asparagine glycan. 2 disulfide bridges follow: cysteine 346–cysteine 352 and cysteine 374–cysteine 382.

Belongs to the glycosyl hydrolase 28 family.

Its subcellular location is the secreted. Functionally, pectinolytic enzymes consist of four classes of enzymes: pectine lyase, polygalacturonase, pectin methylesterase and rhamnogalacturonase. Hydrolyzes alpha-D-galacturonopyranosyl-(1,2)-alpha-L-rhamnopyranosyl linkages in the backbone of the hairy regions of pectins. The protein is Probable rhamnogalacturonase E (rhgE) of Aspergillus niger (strain ATCC MYA-4892 / CBS 513.88 / FGSC A1513).